The sequence spans 214 residues: Pyridoxine/pyridoxamine 5'-phosphate oxidase (214 aa).

Residues 8 to 11 (RINY) and Lys66 contribute to the substrate site. FMN contacts are provided by residues 61–66 (RIVLIK), 76–77 (FT), Arg82, Lys83, and Gln105. 3 residues coordinate substrate: Tyr123, Arg127, and Ser131. FMN is bound by residues 140 to 141 (QS) and Trp184. 190–192 (RLH) lines the substrate pocket. Arg194 provides a ligand contact to FMN.

Belongs to the pyridoxamine 5'-phosphate oxidase family. In terms of assembly, homodimer. FMN is required as a cofactor.

The enzyme catalyses pyridoxamine 5'-phosphate + O2 + H2O = pyridoxal 5'-phosphate + H2O2 + NH4(+). The catalysed reaction is pyridoxine 5'-phosphate + O2 = pyridoxal 5'-phosphate + H2O2. It participates in cofactor metabolism; pyridoxal 5'-phosphate salvage; pyridoxal 5'-phosphate from pyridoxamine 5'-phosphate: step 1/1. Its pathway is cofactor metabolism; pyridoxal 5'-phosphate salvage; pyridoxal 5'-phosphate from pyridoxine 5'-phosphate: step 1/1. Catalyzes the oxidation of either pyridoxine 5'-phosphate (PNP) or pyridoxamine 5'-phosphate (PMP) into pyridoxal 5'-phosphate (PLP). This Burkholderia lata (strain ATCC 17760 / DSM 23089 / LMG 22485 / NCIMB 9086 / R18194 / 383) protein is Pyridoxine/pyridoxamine 5'-phosphate oxidase.